We begin with the raw amino-acid sequence, 393 residues long: NAD(P)H-quinone oxidoreductase subunit H, chloroplastic (393 aa).

Belongs to the complex I 49 kDa subunit family. NDH is composed of at least 16 different subunits, 5 of which are encoded in the nucleus.

It is found in the plastid. The protein localises to the chloroplast thylakoid membrane. The enzyme catalyses a plastoquinone + NADH + (n+1) H(+)(in) = a plastoquinol + NAD(+) + n H(+)(out). It carries out the reaction a plastoquinone + NADPH + (n+1) H(+)(in) = a plastoquinol + NADP(+) + n H(+)(out). NDH shuttles electrons from NAD(P)H:plastoquinone, via FMN and iron-sulfur (Fe-S) centers, to quinones in the photosynthetic chain and possibly in a chloroplast respiratory chain. The immediate electron acceptor for the enzyme in this species is believed to be plastoquinone. Couples the redox reaction to proton translocation, and thus conserves the redox energy in a proton gradient. This Spinacia oleracea (Spinach) protein is NAD(P)H-quinone oxidoreductase subunit H, chloroplastic.